A 177-amino-acid polypeptide reads, in one-letter code: Deoxyuridine 5'-triphosphate nucleotidohydrolase (177 aa).

Substrate contacts are provided by residues 83-85 (RSG), asparagine 96, 100-102 (TID), and lysine 110. A compositionally biased stretch (polar residues) spans 150 to 163 (DLTSSQTDLSNQPN). Positions 150–177 (DLTSSQTDLSNQPNTGRGTGGFGSTGQK) are disordered. Residues 166–177 (RGTGGFGSTGQK) are compositionally biased toward gly residues.

Belongs to the dUTPase family. The cofactor is Mg(2+).

The catalysed reaction is dUTP + H2O = dUMP + diphosphate + H(+). It participates in pyrimidine metabolism; dUMP biosynthesis; dUMP from dCTP (dUTP route): step 2/2. Its function is as follows. This enzyme is involved in nucleotide metabolism: it produces dUMP, the immediate precursor of thymidine nucleotides and it decreases the intracellular concentration of dUTP so that uracil cannot be incorporated into DNA. This Bartonella bacilliformis (strain ATCC 35685 / KC583 / Herrer 020/F12,63) protein is Deoxyuridine 5'-triphosphate nucleotidohydrolase.